The primary structure comprises 296 residues: MNKEQLEKMKNGKGFIAALDQSGGSTPKALKEYGVNEDQYSNEDEMFQLVHDMRTRVVTSPSFSPDKILGAILFEQTMDREVEGKYTADYLADKGVVPFLKVDKGLAEEQNGVQLMKPIDNLDSLLDRANERHIFGTKMRSNILELNEQGIKDVVEQQFEVAKQIIAKGLVPIIEPEVNINAKDKAEIEKVLKAELKKGLDNLNADQLVMLKLTIPTEPNLYKELAEHPNVVRVVVLSGGYSREKANELLKDNAELIASFSRALASDLRAGQSKEEFDKALGDAVESIYDASVNKN.

Residue Glu175 is the Proton acceptor of the active site. Lys212 serves as the catalytic Schiff-base intermediate with dihydroxyacetone-P.

This sequence belongs to the class I fructose-bisphosphate aldolase family.

It carries out the reaction beta-D-fructose 1,6-bisphosphate = D-glyceraldehyde 3-phosphate + dihydroxyacetone phosphate. It participates in carbohydrate degradation; glycolysis; D-glyceraldehyde 3-phosphate and glycerone phosphate from D-glucose: step 4/4. The sequence is that of Fructose-bisphosphate aldolase class 1 from Staphylococcus aureus (strain MSSA476).